We begin with the raw amino-acid sequence, 20 residues long: Hemocyanin subunit Ia (20 aa).

The disordered stretch occupies residues 1-20 (ADXQPGDSTDKLLAQKQDDV).

It belongs to the tyrosinase family. Hemocyanin subfamily. In terms of assembly, composed of 3 major subunits (IB, II and III) and 1 minor subunit (IA) which form homohexamers and heterohexamers. May also form larger structures. In terms of tissue distribution, hemolymph.

It localises to the secreted. It is found in the extracellular space. In terms of biological role, hemocyanins are copper-containing oxygen carriers occurring freely dissolved in the hemolymph of many mollusks and arthropods. The sequence is that of Hemocyanin subunit Ia from Panulirus japonicus (Japanese spiny lobster).